Consider the following 224-residue polypeptide: Orotate phosphoribosyltransferase (224 aa).

K29 is a binding site for 5-phospho-alpha-D-ribose 1-diphosphate. Residue 37–38 participates in orotate binding; sequence FF. Residues 75–76, R105, K106, K109, H111, and 130–138 each bind 5-phospho-alpha-D-ribose 1-diphosphate; these read YK and DDVITAGTS. Residues T134 and R162 each coordinate orotate.

This sequence belongs to the purine/pyrimidine phosphoribosyltransferase family. PyrE subfamily. As to quaternary structure, homodimer. Mg(2+) is required as a cofactor.

The catalysed reaction is orotidine 5'-phosphate + diphosphate = orotate + 5-phospho-alpha-D-ribose 1-diphosphate. The protein operates within pyrimidine metabolism; UMP biosynthesis via de novo pathway; UMP from orotate: step 1/2. In terms of biological role, catalyzes the transfer of a ribosyl phosphate group from 5-phosphoribose 1-diphosphate to orotate, leading to the formation of orotidine monophosphate (OMP). The sequence is that of Orotate phosphoribosyltransferase from Bordetella parapertussis (strain 12822 / ATCC BAA-587 / NCTC 13253).